Reading from the N-terminus, the 401-residue chain is Voltage-gated potassium channel subunit beta-1 (401 aa).

Positions 90, 91, 97, and 119 each coordinate NADP(+). Catalysis depends on tyrosine 124, which acts as the Proton donor/acceptor. NADP(+)-binding residues include asparagine 192, serine 222, arginine 223, glutamine 248, tryptophan 277, serine 278, proline 279, leucine 280, alanine 281, cysteine 282, lysine 288, arginine 298, glycine 357, serine 359, glutamine 363, glutamate 366, and asparagine 367.

This sequence belongs to the shaker potassium channel beta subunit family. Homotetramer. Interaction with tetrameric potassium channel alpha subunits gives rise to a heterooctamer. Identified in potassium channel complexes containing KCNA1, KCNA2, KCNA4, KCNA5, KCNA6, KCNAB1 and KCNAB2. Part of a complex containing KCNA1, KCNA4 and LGI1; interaction with LGI1 inhibits down-regulation of KCNA1 channel activity. Interacts with the dimer formed by GNB1 and GNG2; this enhances KCNA1 binding. Interacts with SQSTM1.

It is found in the cytoplasm. It localises to the membrane. The protein localises to the cell membrane. It catalyses the reaction a primary alcohol + NADP(+) = an aldehyde + NADPH + H(+). It carries out the reaction a secondary alcohol + NADP(+) = a ketone + NADPH + H(+). Its function is as follows. Regulatory subunit of the voltage-gated potassium (Kv) channels composed of pore-forming and potassium-conducting alpha subunits and of regulatory beta subunits. The beta-1/KCNAB1 cytoplasmic subunit mediates closure of delayed rectifier potassium channels by physically obstructing the pore via its N-terminal domain and increases the speed of channel closure for other family members. Promotes the inactivation of KCNA1, KCNA2, KCNA4, KCNA5 and KCNA6 alpha subunit-containing channels. Displays nicotinamide adenine dinucleotide phosphate (NADPH)-dependent aldoketoreductase activity by catalyzing the NADPH-dependent reduction of a variety of endogenous aldehydes and ketones. The binding of NADPH is required for efficient down-regulation of potassium channel activity. Oxidation of the bound NADPH restrains N-terminal domain from blocking the channel, thereby decreasing N-type inactivation of potassium channel activity. The sequence is that of Voltage-gated potassium channel subunit beta-1 (KCNAB1) from Bos taurus (Bovine).